The chain runs to 69 residues: Cytochrome c oxidase subunit 8A, mitochondrial (69 aa).

A mitochondrion-targeting transit peptide spans 1-25; that stretch reads MSVLTPLLLRGLTGSARRLPVPRAK. The short motif at 2-19 is the SIFI-degron element; sequence SVLTPLLLRGLTGSARRL. At 26–36 the chain is on the mitochondrial matrix side; that stretch reads IHSLPPDEKLG. A helical membrane pass occupies residues 37 to 60; it reads IMELAVGLTSCFVTFLLPAGWILS. Topologically, residues 61-69 are mitochondrial intermembrane; sequence HLETYRRPE.

This sequence belongs to the cytochrome c oxidase VIII family. As to quaternary structure, component of the cytochrome c oxidase (complex IV, CIV), a multisubunit enzyme composed of 14 subunits. The complex is composed of a catalytic core of 3 subunits MT-CO1, MT-CO2 and MT-CO3, encoded in the mitochondrial DNA, and 11 supernumerary subunits COX4I, COX5A, COX5B, COX6A, COX6B, COX6C, COX7A, COX7B, COX7C, COX8 and NDUFA4, which are encoded in the nuclear genome. The complex exists as a monomer or a dimer and forms supercomplexes (SCs) in the inner mitochondrial membrane with NADH-ubiquinone oxidoreductase (complex I, CI) and ubiquinol-cytochrome c oxidoreductase (cytochrome b-c1 complex, complex III, CIII), resulting in different assemblies (supercomplex SCI(1)III(2)IV(1) and megacomplex MCI(2)III(2)IV(2)). In terms of processing, in response to mitochondrial stress, the precursor protein is ubiquitinated by the SIFI complex in the cytoplasm before mitochondrial import, leading to its degradation. Within the SIFI complex, UBR4 initiates ubiquitin chain that are further elongated or branched by KCMF1.

It localises to the mitochondrion inner membrane. It participates in energy metabolism; oxidative phosphorylation. Functionally, component of the cytochrome c oxidase, the last enzyme in the mitochondrial electron transport chain which drives oxidative phosphorylation. The respiratory chain contains 3 multisubunit complexes succinate dehydrogenase (complex II, CII), ubiquinol-cytochrome c oxidoreductase (cytochrome b-c1 complex, complex III, CIII) and cytochrome c oxidase (complex IV, CIV), that cooperate to transfer electrons derived from NADH and succinate to molecular oxygen, creating an electrochemical gradient over the inner membrane that drives transmembrane transport and the ATP synthase. Cytochrome c oxidase is the component of the respiratory chain that catalyzes the reduction of oxygen to water. Electrons originating from reduced cytochrome c in the intermembrane space (IMS) are transferred via the dinuclear copper A center (CU(A)) of subunit 2 and heme A of subunit 1 to the active site in subunit 1, a binuclear center (BNC) formed by heme A3 and copper B (CU(B)). The BNC reduces molecular oxygen to 2 water molecules using 4 electrons from cytochrome c in the IMS and 4 protons from the mitochondrial matrix. The protein is Cytochrome c oxidase subunit 8A, mitochondrial (COX8A) of Gorilla gorilla gorilla (Western lowland gorilla).